The primary structure comprises 430 residues: Putative membrane fusion protein SilB (430 aa).

Positions 1–28 are cleaved as a signal peptide; it reads MASLKIKYAAIIISSLIAGGLISVTAWQ. Positions 407-430 are disordered; that stretch reads RHPEKTENSMPAMSEQPVNMHSGH. Over residues 414-430 the composition is skewed to polar residues; sequence NSMPAMSEQPVNMHSGH.

The protein belongs to the membrane fusion protein (MFP) (TC 8.A.1) family.

Component of the sil cation efflux system that confers resistance to silver. May be part of a three-component cation/proton antiporter. This Salmonella typhimurium protein is Putative membrane fusion protein SilB (silB).